The chain runs to 1166 residues: Serine-aspartate repeat-containing protein E (1166 aa).

Residues 1 to 52 (MINRDNKKAITKKGMISNRLNKFSIRKYTVGTASILVGTTLIFGLGNQEAKA) form the signal peptide. The short motif at 23 to 34 (FSIRKYTVGTAS) is the YSIRK-G/S signaling motif element. The interval 53 to 606 (AENTSTENAK…GDGTVKPEEK (554 aa)) is ligand binding A region. The interval 54-230 (ENTSTENAKQ…SKEELKNNPE (177 aa)) is disordered. Residues 61–75 (AKQDDATTSDNKEVV) are compositionally biased toward basic and acidic residues. The span at 77 to 90 (ETENNSTTENNSTN) shows a compositional bias: low complexity. Residues 92–108 (IKKETNTDSQPEAKKES) are compositionally biased toward basic and acidic residues. Polar residues predominate over residues 118–129 (NNVTATTETKPQ). A compositionally biased stretch (basic and acidic residues) spans 130 to 145 (NIEKENVKPSTDKTAT). Residues 166 to 178 (TTKPSTSEPSTSE) show a composition bias toward low complexity. Positions 179-212 (IQTKPTTPQESTNIENSQPQPTPSKVDNQVTDAT) are enriched in polar residues. The segment covering 221–230 (SKEELKNNPE) has biased composition (basic and acidic residues). 3 consecutive CNA-B domains span residues 607–719 (LYKI…YKEP), 720–829 (KYNL…YKTP), and 830–940 (KYSL…EEDT). Positions 904 to 1141 (VTNTTEDDKD…TGSENNGSNN (238 aa)) are disordered. Composition is skewed to acidic residues over residues 908 to 918 (TEDDKDADGGE) and 935 to 1105 (YFEE…DSDS). The short motif at 1129–1133 (LPETG) is the LPXTG sorting signal element. Thr1132 carries the post-translational modification Pentaglycyl murein peptidoglycan amidated threonine. Positions 1133 to 1166 (GSENNGSNNATLFGGLFAALGSLLLFGRRKKQNK) are cleaved as a propeptide — removed by sortase.

It belongs to the serine-aspartate repeat-containing protein (SDr) family. Interacts with host complement factor H/CFAH (via C-terminus). Interacts with host complement regulator C4BPA.

It localises to the secreted. The protein localises to the cell wall. Functionally, cell surface-associated calcium-binding protein which plays an important role in adhesion and pathogenesis. Contributes to the resistance to killing by innate immune components in blood and thus attenuates bacterial clearance by interacting with host complement factor H/CFAH and modulating its activity. Inhibits also bacterial opsonization and killing by interacting with host complement regulator C4BPA and thus inhibiting classical complement pathway activation. This chain is Serine-aspartate repeat-containing protein E (sdrE), found in Staphylococcus aureus (strain Newman).